Reading from the N-terminus, the 324-residue chain is Glyoxylate/hydroxypyruvate reductase B (324 aa).

Catalysis depends on residues arginine 237 and glutamate 266. Residue histidine 285 is the Proton donor of the active site.

This sequence belongs to the D-isomer specific 2-hydroxyacid dehydrogenase family. GhrB subfamily. As to quaternary structure, homodimer.

The protein localises to the cytoplasm. It carries out the reaction glycolate + NADP(+) = glyoxylate + NADPH + H(+). The enzyme catalyses (R)-glycerate + NAD(+) = 3-hydroxypyruvate + NADH + H(+). The catalysed reaction is (R)-glycerate + NADP(+) = 3-hydroxypyruvate + NADPH + H(+). Functionally, catalyzes the NADPH-dependent reduction of glyoxylate and hydroxypyruvate into glycolate and glycerate, respectively. In Escherichia coli O9:H4 (strain HS), this protein is Glyoxylate/hydroxypyruvate reductase B.